Consider the following 805-residue polypeptide: Leucine--tRNA ligase (805 aa).

The short motif at 40-51 is the 'HIGH' region element; it reads PYPSGAGLHVGH. Residues 576 to 580 carry the 'KMSKS' region motif; that stretch reads KMSKS. Lys-579 lines the ATP pocket.

This sequence belongs to the class-I aminoacyl-tRNA synthetase family.

It localises to the cytoplasm. The catalysed reaction is tRNA(Leu) + L-leucine + ATP = L-leucyl-tRNA(Leu) + AMP + diphosphate. The chain is Leucine--tRNA ligase from Geobacillus kaustophilus (strain HTA426).